Reading from the N-terminus, the 264-residue chain is Acyl-[acyl-carrier-protein]--UDP-N-acetylglucosamine O-acyltransferase (264 aa).

Belongs to the transferase hexapeptide repeat family. LpxA subfamily. As to quaternary structure, homotrimer.

The protein localises to the cytoplasm. The enzyme catalyses a (3R)-hydroxyacyl-[ACP] + UDP-N-acetyl-alpha-D-glucosamine = a UDP-3-O-[(3R)-3-hydroxyacyl]-N-acetyl-alpha-D-glucosamine + holo-[ACP]. The protein operates within glycolipid biosynthesis; lipid IV(A) biosynthesis; lipid IV(A) from (3R)-3-hydroxytetradecanoyl-[acyl-carrier-protein] and UDP-N-acetyl-alpha-D-glucosamine: step 1/6. Involved in the biosynthesis of lipid A, a phosphorylated glycolipid that anchors the lipopolysaccharide to the outer membrane of the cell. The sequence is that of Acyl-[acyl-carrier-protein]--UDP-N-acetylglucosamine O-acyltransferase from Chlorobium phaeobacteroides (strain DSM 266 / SMG 266 / 2430).